The chain runs to 346 residues: Patr class I histocompatibility antigen, CH28 alpha chain (346 aa).

A signal peptide spans 1 to 21; that stretch reads MAPRSLLLLFSGALALTETWA. The alpha-1 stretch occupies residues 22–111; that stretch reads GSHSLRYFST…LLRRYNQSEA (90 aa). The Extracellular segment spans residues 22-305; sequence GSHSLRYFST…EQSPQPTIPI (284 aa). A glycan (N-linked (GlcNAc...) asparagine) is linked at N107. Residues 112-203 form an alpha-2 region; the sequence is GSHTLQGMNG…ENGKETLQRA (92 aa). Cystine bridges form between C122/C185 and C224/C280. Residues 204-295 are alpha-3; that stretch reads DPPKAHIAHH…GLPQPLTLRW (92 aa). An Ig-like C1-type domain is found at 206–294; that stretch reads PKAHIAHHPI…EGLPQPLTLR (89 aa). The connecting peptide stretch occupies residues 296–305; sequence EQSPQPTIPI. The helical transmembrane segment at 306 to 329 threads the bilayer; sequence VGIVAGLVVLGAVVTGAVVAAVMW. Topologically, residues 330-346 are cytoplasmic; the sequence is RKKSSDRNRGSYSQAAV.

Belongs to the MHC class I family. Heterodimer of an alpha chain and a beta chain (beta-2-microglobulin).

It localises to the membrane. In terms of biological role, involved in the presentation of foreign antigens to the immune system. The polypeptide is Patr class I histocompatibility antigen, CH28 alpha chain (Pan troglodytes (Chimpanzee)).